Here is a 120-residue protein sequence, read N- to C-terminus: Putative gamma-glutamylcyclotransferase MJ1514 (120 aa).

A substrate-binding site is contributed by 7–10; it reads YGSL. Glu74 acts as the Proton acceptor in catalysis.

Belongs to the gamma-glutamylcyclotransferase family.

Its function is as follows. Putative gamma-glutamylcyclotransferase. The sequence is that of Putative gamma-glutamylcyclotransferase MJ1514 from Methanocaldococcus jannaschii (strain ATCC 43067 / DSM 2661 / JAL-1 / JCM 10045 / NBRC 100440) (Methanococcus jannaschii).